Here is a 366-residue protein sequence, read N- to C-terminus: Histone-lysine N-methyltransferase SETD7 (366 aa).

MORN repeat units lie at residues 36-58 (FEGH…DGST), 59-81 (LEGF…DGGS), and 106-128 (FKGQ…DGGS). The region spanning 214–336 (ERVYVNDSLI…KDEELTVAYG (123 aa)) is the SET domain. S-adenosyl-L-methionine is bound by residues 226 to 228 (AGE), N296, and H297.

The protein belongs to the class V-like SAM-binding methyltransferase superfamily. Histone-lysine methyltransferase family. SET7 subfamily.

It is found in the nucleus. It localises to the chromosome. It catalyses the reaction L-lysyl(4)-[histone H3] + S-adenosyl-L-methionine = N(6)-methyl-L-lysyl(4)-[histone H3] + S-adenosyl-L-homocysteine + H(+). It carries out the reaction L-lysyl-[protein] + S-adenosyl-L-methionine = N(6)-methyl-L-lysyl-[protein] + S-adenosyl-L-homocysteine + H(+). Histone methyltransferase that specifically monomethylates 'Lys-4' of histone H3. H3 'Lys-4' methylation represents a specific tag for epigenetic transcriptional activation. Plays a central role in the transcriptional activation of genes. Also has methyltransferase activity toward non-histone proteins. This is Histone-lysine N-methyltransferase SETD7 (setd7) from Xenopus tropicalis (Western clawed frog).